Reading from the N-terminus, the 341-residue chain is MYTLARQLLFKLSPETSHDLSLDLIGAGGRLGLNGVLCKQPAALPVSVMGLNFANPVGLAAGLDKNGAAIDGFAQLGFGFVEIGTVTPRAQPGNPKPRLFRLPEATAIINRMGFNNLGVDHLLERVRAARYDGVLGINIGKNFDTPVERAVDDYLICLNKVYGHASYITVNISSPNTPGLRSLQFGDSLKQLLDALAERREQLAGEHGKRVPLAIKIAPDMSDEETALVAATLMESGMDAVIATNTTMGREGVENLPYGGEAGGLSGAPVLEKSTHIVKVLSAELGGKMPIIAAGGITEGRHAAEKIAAGASLVQIYSGFIYRGPALIREAVDAIAAMPRA.

Residues 61 to 65 (AGLDK) and threonine 85 contribute to the FMN site. A substrate-binding site is contributed by lysine 65. 110-114 (NRMGF) lines the substrate pocket. The FMN site is built by asparagine 138 and asparagine 171. Asparagine 171 provides a ligand contact to substrate. The active-site Nucleophile is serine 174. Asparagine 176 provides a ligand contact to substrate. Lysine 216 and threonine 244 together coordinate FMN. Residue 245–246 (NT) coordinates substrate. Residues glycine 267, glycine 296, and 317–318 (YS) contribute to the FMN site.

The protein belongs to the dihydroorotate dehydrogenase family. Type 2 subfamily. In terms of assembly, monomer. Requires FMN as cofactor.

The protein localises to the cell membrane. The enzyme catalyses (S)-dihydroorotate + a quinone = orotate + a quinol. Its pathway is pyrimidine metabolism; UMP biosynthesis via de novo pathway; orotate from (S)-dihydroorotate (quinone route): step 1/1. Its function is as follows. Catalyzes the conversion of dihydroorotate to orotate with quinone as electron acceptor. This Pseudomonas putida (strain W619) protein is Dihydroorotate dehydrogenase (quinone).